We begin with the raw amino-acid sequence, 172 residues long: ATP synthase subunit b (172 aa).

The chain crosses the membrane as a helical span at residues 12 to 32 (SLYIGDLVFYIVTFIILMLLV). 2 stretches are compositionally biased toward basic and acidic residues: residues 63–74 (ESAEKMAAKRQA) and 116–131 (AQKD…LNSA). The tract at residues 63 to 131 (ESAEKMAAKR…QARRDALNSA (69 aa)) is disordered.

The protein belongs to the ATPase B chain family. As to quaternary structure, F-type ATPases have 2 components, F(1) - the catalytic core - and F(0) - the membrane proton channel. F(1) has five subunits: alpha(3), beta(3), gamma(1), delta(1), epsilon(1). F(0) has three main subunits: a(1), b(2) and c(10-14). The alpha and beta chains form an alternating ring which encloses part of the gamma chain. F(1) is attached to F(0) by a central stalk formed by the gamma and epsilon chains, while a peripheral stalk is formed by the delta and b chains.

It localises to the cell membrane. Its function is as follows. F(1)F(0) ATP synthase produces ATP from ADP in the presence of a proton or sodium gradient. F-type ATPases consist of two structural domains, F(1) containing the extramembraneous catalytic core and F(0) containing the membrane proton channel, linked together by a central stalk and a peripheral stalk. During catalysis, ATP synthesis in the catalytic domain of F(1) is coupled via a rotary mechanism of the central stalk subunits to proton translocation. Component of the F(0) channel, it forms part of the peripheral stalk, linking F(1) to F(0). This Limosilactobacillus reuteri (strain DSM 20016) (Lactobacillus reuteri) protein is ATP synthase subunit b.